A 116-amino-acid polypeptide reads, in one-letter code: NADPH-dependent 7-cyano-7-deazaguanine reductase (116 aa).

Catalysis depends on C31, which acts as the Thioimide intermediate. D38 functions as the Proton donor in the catalytic mechanism. Substrate is bound by residues 53–55 (VEL) and 72–73 (YE).

This sequence belongs to the GTP cyclohydrolase I family. QueF type 1 subfamily.

It is found in the cytoplasm. It catalyses the reaction 7-aminomethyl-7-carbaguanine + 2 NADP(+) = 7-cyano-7-deazaguanine + 2 NADPH + 3 H(+). It participates in tRNA modification; tRNA-queuosine biosynthesis. Functionally, catalyzes the NADPH-dependent reduction of 7-cyano-7-deazaguanine (preQ0) to 7-aminomethyl-7-deazaguanine (preQ1). This chain is NADPH-dependent 7-cyano-7-deazaguanine reductase, found in Chloroherpeton thalassium (strain ATCC 35110 / GB-78).